Reading from the N-terminus, the 125-residue chain is NYHPASEKVQALDEKILLLRPAFQYRDNIAKEYENKFKNQTTLKVEQILQNQGYKVINVDSSDKDDLSFAQKKEGYLAVAMNGEIVLRPDPKRTIQKKSEPGLLFSTGLDKMEGVLIPAGFVKVT.

The N-acetyl-neuraminyl-alpha(2,3)-lactose binding motif stretch occupies residues 92-97 (KRTIQK).

The protein localises to the cell outer membrane. This chain is Neuraminyllactose-binding hemagglutinin (hpaA), found in Helicobacter pylori (Campylobacter pylori).